Reading from the N-terminus, the 220-residue chain is Deoxyribose-phosphate aldolase (220 aa).

The active-site Proton donor/acceptor is aspartate 89. The active-site Schiff-base intermediate with acetaldehyde is the lysine 150. The active-site Proton donor/acceptor is lysine 182.

The protein belongs to the DeoC/FbaB aldolase family. DeoC type 1 subfamily.

It is found in the cytoplasm. It catalyses the reaction 2-deoxy-D-ribose 5-phosphate = D-glyceraldehyde 3-phosphate + acetaldehyde. It functions in the pathway carbohydrate degradation; 2-deoxy-D-ribose 1-phosphate degradation; D-glyceraldehyde 3-phosphate and acetaldehyde from 2-deoxy-alpha-D-ribose 1-phosphate: step 2/2. Catalyzes a reversible aldol reaction between acetaldehyde and D-glyceraldehyde 3-phosphate to generate 2-deoxy-D-ribose 5-phosphate. This Mycoplasmoides pirum (Mycoplasma pirum) protein is Deoxyribose-phosphate aldolase.